The chain runs to 265 residues: MKVLLLKDAKEDDSGLDPYIQELRLCGLEATLIPVLSFEFMSLPSLSEKLSHPEGFGGLIFTSPRAVEAVKLCLEKDNKTEAWEKSLKDRWNAKSVYVVGSATASLVNKIGLDAEGAGSGNAEKLAEYICSKPSSELPLLFPCGTIKGDTLPKMLKDKGIPMESMHVYQTVPHPGIQGSLKSYYEDQGIPASITFFSPSGLKYSLEYIQALSGSSFDQIKFIAIGPSTTRAMAAKGLPVSCTAESPTPQALAAGIRNVLKPNHCC.

Belongs to the uroporphyrinogen-III synthase family. Monomer.

The protein resides in the cytoplasm. The protein localises to the cytosol. It catalyses the reaction hydroxymethylbilane = uroporphyrinogen III + H2O. It participates in porphyrin-containing compound metabolism; protoporphyrin-IX biosynthesis; coproporphyrinogen-III from 5-aminolevulinate: step 3/4. Catalyzes cyclization of the linear tetrapyrrole, hydroxymethylbilane, to the macrocyclic uroporphyrinogen III, the branch point for the various sub-pathways leading to the wide diversity of porphyrins. Porphyrins act as cofactors for a multitude of enzymes that perform a variety of processes within the cell such as methionine synthesis (vitamin B12) or oxygen transport (heme). The polypeptide is Uroporphyrinogen-III synthase (Uros) (Mus musculus (Mouse)).